Here is a 501-residue protein sequence, read N- to C-terminus: Aldehyde dehydrogenase 1A1 (501 aa).

Position 2 is an N-acetylserine (Ser-2). N6-acetyllysine occurs at positions 91 and 128. NAD(+) contacts are provided by residues 167-170 (LPWN), 193-196 (KPAE), 226-227 (GP), and 246-247 (GS). Residue Lys-252 is modified to N6-acetyllysine. Glu-269 functions as the Proton acceptor in the catalytic mechanism. 269 to 271 (ELG) contributes to the NAD(+) binding site. Residue Cys-303 is the Nucleophile of the active site. The interval 336–501 (LTPGVSQGPQ…VTVKISQKNS (166 aa)) is mediates interaction with PRMT3. The residue at position 337 (Thr-337) is a Phosphothreonine. Residue 349 to 353 (EQYDK) participates in NAD(+) binding. N6-acetyllysine is present on residues Lys-353 and Lys-367. An NAD(+)-binding site is contributed by 400–402 (EIF). Lys-410 is modified (N6-acetyllysine). The residue at position 413 (Ser-413) is a Phosphoserine. 3 positions are modified to N6-acetyllysine: Lys-419, Lys-435, and Lys-495.

This sequence belongs to the aldehyde dehydrogenase family. In terms of assembly, homotetramer. Interacts with PRMT3; the interaction is direct, inhibits ALDH1A1 aldehyde dehydrogenase activity and is independent of the methyltransferase activity of PRMT3. Post-translationally, the N-terminus is blocked most probably by acetylation.

It localises to the cytoplasm. The protein localises to the cytosol. The protein resides in the cell projection. It is found in the axon. The enzyme catalyses an aldehyde + NAD(+) + H2O = a carboxylate + NADH + 2 H(+). It carries out the reaction all-trans-retinal + NAD(+) + H2O = all-trans-retinoate + NADH + 2 H(+). It catalyses the reaction 9-cis-retinal + NAD(+) + H2O = 9-cis-retinoate + NADH + 2 H(+). The catalysed reaction is 11-cis-retinal + NAD(+) + H2O = 11-cis-retinoate + NADH + 2 H(+). The enzyme catalyses 13-cis-retinal + NAD(+) + H2O = 13-cis-retinoate + NADH + 2 H(+). It carries out the reaction 3-deoxyglucosone + NAD(+) + H2O = 2-dehydro-3-deoxy-D-gluconate + NADH + 2 H(+). It catalyses the reaction (E)-4-hydroxynon-2-enal + NAD(+) + H2O = (E)-4-hydroxynon-2-enoate + NADH + 2 H(+). The catalysed reaction is malonaldehyde + NAD(+) + H2O = 3-oxopropanoate + NADH + 2 H(+). The enzyme catalyses hexanal + NAD(+) + H2O = hexanoate + NADH + 2 H(+). It carries out the reaction propanal + NAD(+) + H2O = propanoate + NADH + 2 H(+). It catalyses the reaction acetaldehyde + NAD(+) + H2O = acetate + NADH + 2 H(+). The catalysed reaction is benzaldehyde + NAD(+) + H2O = benzoate + NADH + 2 H(+). The enzyme catalyses 4-aminobutanal + NAD(+) + H2O = 4-aminobutanoate + NADH + 2 H(+). It participates in cofactor metabolism; retinol metabolism. Cytosolic dehydrogenase that catalyzes the irreversible oxidation of a wide range of aldehydes to their corresponding carboxylic acid. Functions downstream of retinol dehydrogenases and catalyzes the oxidation of retinaldehyde into retinoic acid, the second step in the oxidation of retinol/vitamin A into retinoic acid. This pathway is crucial to control the levels of retinol and retinoic acid, two important molecules which excess can be teratogenic and cytotoxic. Also oxidizes aldehydes resulting from lipid peroxidation like (E)-4-hydroxynon-2-enal/HNE, malonaldehyde and hexanal that form protein adducts and are highly cytotoxic. By participating for instance to the clearance of (E)-4-hydroxynon-2-enal/HNE in the lens epithelium prevents the formation of HNE-protein adducts and lens opacification. Also functions downstream of fructosamine-3-kinase in the fructosamine degradation pathway by catalyzing the oxidation of 3-deoxyglucosone, the carbohydrate product of fructosamine 3-phosphate decomposition, which is itself a potent glycating agent that may react with lysine and arginine side-chains of proteins. Also has an aminobutyraldehyde dehydrogenase activity and is probably part of an alternative pathway for the biosynthesis of GABA/4-aminobutanoate in midbrain, thereby playing a role in GABAergic synaptic transmission. The polypeptide is Aldehyde dehydrogenase 1A1 (Equus caballus (Horse)).